We begin with the raw amino-acid sequence, 196 residues long: Peptidyl-tRNA hydrolase (196 aa).

Position 15 (His15) interacts with tRNA. His20 acts as the Proton acceptor in catalysis. TRNA is bound by residues Tyr66, Asn68, and Asn114.

The protein belongs to the PTH family. In terms of assembly, monomer.

The protein localises to the cytoplasm. The catalysed reaction is an N-acyl-L-alpha-aminoacyl-tRNA + H2O = an N-acyl-L-amino acid + a tRNA + H(+). Its function is as follows. Hydrolyzes ribosome-free peptidyl-tRNAs (with 1 or more amino acids incorporated), which drop off the ribosome during protein synthesis, or as a result of ribosome stalling. Functionally, catalyzes the release of premature peptidyl moieties from peptidyl-tRNA molecules trapped in stalled 50S ribosomal subunits, and thus maintains levels of free tRNAs and 50S ribosomes. The chain is Peptidyl-tRNA hydrolase from Polynucleobacter asymbioticus (strain DSM 18221 / CIP 109841 / QLW-P1DMWA-1) (Polynucleobacter necessarius subsp. asymbioticus).